Here is a 177-residue protein sequence, read N- to C-terminus: MYVPKESQPKQGGGASGKVKDGKRKIVAQNKKARHDYAIIDTYEAGLVLTGTEVKSLRQGRASLTDGFVQIDGNEAWLHNAHIPEYSQGTWTNHTVRRKRKLLLHREEIDKLASKSEETGHTIVPLALYFKDGRAKAEIALARGKKEYDKRQTLREKQDRRESDRAIAAAKRKQRGE.

2 disordered regions span residues 1-23 (MYVP…KDGK) and 148-177 (YDKR…QRGE). Positions 148–165 (YDKRQTLREKQDRRESDR) are enriched in basic and acidic residues.

The protein belongs to the SmpB family.

The protein resides in the cytoplasm. Functionally, required for rescue of stalled ribosomes mediated by trans-translation. Binds to transfer-messenger RNA (tmRNA), required for stable association of tmRNA with ribosomes. tmRNA and SmpB together mimic tRNA shape, replacing the anticodon stem-loop with SmpB. tmRNA is encoded by the ssrA gene; the 2 termini fold to resemble tRNA(Ala) and it encodes a 'tag peptide', a short internal open reading frame. During trans-translation Ala-aminoacylated tmRNA acts like a tRNA, entering the A-site of stalled ribosomes, displacing the stalled mRNA. The ribosome then switches to translate the ORF on the tmRNA; the nascent peptide is terminated with the 'tag peptide' encoded by the tmRNA and targeted for degradation. The ribosome is freed to recommence translation, which seems to be the essential function of trans-translation. This is SsrA-binding protein from Streptomyces avermitilis (strain ATCC 31267 / DSM 46492 / JCM 5070 / NBRC 14893 / NCIMB 12804 / NRRL 8165 / MA-4680).